The following is a 1430-amino-acid chain: Death-associated protein kinase 1 (1430 aa).

Residues 13–275 enclose the Protein kinase domain; that stretch reads YDTGEELGSG…IQDSLQHPWI (263 aa). ATP contacts are provided by residues 19-27, lysine 42, 94-96, and glutamate 100; these read LGSGQFAVV and ELV. Catalysis depends on aspartate 139, which acts as the Proton acceptor. Aspartate 161 contributes to the ATP binding site. A calmodulin-binding region spans residues 267–334; the sequence is QDSLQHPWIK…RSNMSVARSD (68 aa). Serine 289 is modified (phosphoserine; by RPS6KA1 and RPS6KA3). The interval 292 to 301 is autoinhibitory domain; the sequence is NMEKFKKFAA. Phosphoserine; by autocatalysis is present on serine 308. A phosphoserine mark is found at serine 319 and serine 333. ANK repeat units lie at residues 378–407, 411–440, 444–473, 477–506, 510–539, 543–572, 576–605, and 609–638; these read HGTP…RIDV, GGSN…PLDV, SGEM…NPNI, EEET…NVNI, EGET…DLNA, DGHI…FVDY, HGNT…NLDI, and YGRT…SVEA. Residues 681-955 enclose the Roc domain; that stretch reads TQNLQPRIKL…NHLQEIRSQI (275 aa). Serine 734 is subject to Phosphoserine; by MAPK1. The ANK 9 repeat unit spans residues 875-904; sequence KLKNPLQVVLVATHADIMNVPRPAGGEFGY. Serine 1115 carries the post-translational modification Phosphoserine. Residues 1162–1196 form an ANK 10 repeat; the sequence is EGDADIRLWVNGCKLANRGAELLVLLVNHGQGIEV. The Death domain maps to 1312–1396; sequence KLSRLLDPPD…DAADFLLKAS (85 aa).

This sequence belongs to the protein kinase superfamily. CAMK Ser/Thr protein kinase family. DAP kinase subfamily. Interacts with KLHL20. Interacts (via death domain) with MAPK1 and MAPK3. Interacts with MAP1B (via N-terminus). Interacts with PRKD1 in an oxidative stress-regulated manner. Interacts with PIN1, PDCD6, BECN1, TSC2 and STX1A. Interacts (via kinase domain) with DAPK3 (via kinase domain). Interacts with GRINB. Interacts (via death domain) with UNC5B (via death domain). Interacts with UNC5C (via death domain). Mg(2+) serves as cofactor. Ubiquitinated by the BCR(KLHL20) E3 ubiquitin ligase complex, leading to its degradation by the proteasome. Post-translationally, removal of the C-terminal tail of isoform 2 (corresponding to amino acids 296-337 of isoform 2) by proteolytic cleavage stimulates maximally its membrane-blebbing function. In terms of processing, in response to mitogenic stimulation (PMA or EGF), phosphorylated at Ser-289; phosphorylation suppresses DAPK1 pro-apoptotic function. Autophosphorylation at Ser-308 inhibits its catalytic activity. Phosphorylation at Ser-734 by MAPK1 increases its catalytic activity and promotes cytoplasmic retention of MAPK1. Endoplasmic-stress can cause dephosphorylation at Ser-308. As to expression, isoform 2 is expressed in normal intestinal tissue as well as in colorectal carcinomas.

Its subcellular location is the cytoplasm. The protein resides in the cytoskeleton. It catalyses the reaction L-seryl-[protein] + ATP = O-phospho-L-seryl-[protein] + ADP + H(+). The enzyme catalyses L-threonyl-[protein] + ATP = O-phospho-L-threonyl-[protein] + ADP + H(+). With respect to regulation, activated by Ca(2+)/calmodulin. Regulated by a locking mechanism, involving autophosphorylation at Ser-308 and calmodulin binding. In the inactive state, Ser-308 is phosphorylated. Activation involves its dephosphorylation and a release-of-autoinhibition mechanism where binding of calmodulin induces a conformational change that relieves the steric block of the active site by the autoinhibitory domain. Activity is modulated by UNC5B and NTN1. UNC5B activates it by inhibiting the phosphorylation at Ser-308, whereas NTN1 inhibits UNC5B-mediated activation of DAPK1. Endoplasmic-stress activates by causing Ser-308 dephosphorylation. In terms of biological role, calcium/calmodulin-dependent serine/threonine kinase involved in multiple cellular signaling pathways that trigger cell survival, apoptosis, and autophagy. Regulates both type I apoptotic and type II autophagic cell deaths signal, depending on the cellular setting. The former is caspase-dependent, while the latter is caspase-independent and is characterized by the accumulation of autophagic vesicles. Phosphorylates PIN1 resulting in inhibition of its catalytic activity, nuclear localization, and cellular function. Phosphorylates TPM1, enhancing stress fiber formation in endothelial cells. Phosphorylates STX1A and significantly decreases its binding to STXBP1. Phosphorylates PRKD1 and regulates JNK signaling by binding and activating PRKD1 under oxidative stress. Phosphorylates BECN1, reducing its interaction with BCL2 and BCL2L1 and promoting the induction of autophagy. Phosphorylates TSC2, disrupting the TSC1-TSC2 complex and stimulating mTORC1 activity in a growth factor-dependent pathway. Phosphorylates RPS6, MYL9 and DAPK3. Acts as a signaling amplifier of NMDA receptors at extrasynaptic sites for mediating brain damage in stroke. Cerebral ischemia recruits DAPK1 into the NMDA receptor complex and it phosphorylates GRINB at Ser-1303 inducing injurious Ca(2+) influx through NMDA receptor channels, resulting in an irreversible neuronal death. Required together with DAPK3 for phosphorylation of RPL13A upon interferon-gamma activation which is causing RPL13A involvement in transcript-selective translation inhibition. Its function is as follows. Isoform 2 cannot induce apoptosis but can induce membrane blebbing. This is Death-associated protein kinase 1 (DAPK1) from Homo sapiens (Human).